Here is a 132-residue protein sequence, read N- to C-terminus: Small ribosomal subunit protein uS8 (132 aa).

In terms of assembly, part of the 30S ribosomal subunit. Contacts proteins S5 and S12. A modified and unmodified form exist; the nature of the modification(s) is unknown.

One of the primary rRNA binding proteins, it binds directly to 16S rRNA central domain where it helps coordinate assembly of the platform of the 30S subunit. The chain is Small ribosomal subunit protein uS8 from Rhodopseudomonas palustris (strain ATCC BAA-98 / CGA009).